We begin with the raw amino-acid sequence, 154 residues long: SsrA-binding protein (154 aa).

The interval 134–154 (QREDLKRRAEDRDTQRELARF) is disordered.

This sequence belongs to the SmpB family.

The protein resides in the cytoplasm. In terms of biological role, required for rescue of stalled ribosomes mediated by trans-translation. Binds to transfer-messenger RNA (tmRNA), required for stable association of tmRNA with ribosomes. tmRNA and SmpB together mimic tRNA shape, replacing the anticodon stem-loop with SmpB. tmRNA is encoded by the ssrA gene; the 2 termini fold to resemble tRNA(Ala) and it encodes a 'tag peptide', a short internal open reading frame. During trans-translation Ala-aminoacylated tmRNA acts like a tRNA, entering the A-site of stalled ribosomes, displacing the stalled mRNA. The ribosome then switches to translate the ORF on the tmRNA; the nascent peptide is terminated with the 'tag peptide' encoded by the tmRNA and targeted for degradation. The ribosome is freed to recommence translation, which seems to be the essential function of trans-translation. The protein is SsrA-binding protein of Nitratidesulfovibrio vulgaris (strain ATCC 29579 / DSM 644 / CCUG 34227 / NCIMB 8303 / VKM B-1760 / Hildenborough) (Desulfovibrio vulgaris).